The sequence spans 378 residues: DNA primase small subunit PriS (378 aa).

Residues D98, D100, and D282 contribute to the active site.

It belongs to the eukaryotic-type primase small subunit family. As to quaternary structure, heterodimer of a small subunit (PriS) and a large subunit (PriL). The cofactor is Mg(2+). Mn(2+) serves as cofactor.

In terms of biological role, catalytic subunit of DNA primase, an RNA polymerase that catalyzes the synthesis of short RNA molecules used as primers for DNA polymerase during DNA replication. The small subunit contains the primase catalytic core and has DNA synthesis activity on its own. Binding to the large subunit stabilizes and modulates the activity, increasing the rate of DNA synthesis while decreasing the length of the DNA fragments, and conferring RNA synthesis capability. The DNA polymerase activity may enable DNA primase to also catalyze primer extension after primer synthesis. May also play a role in DNA repair. In Methanosphaerula palustris (strain ATCC BAA-1556 / DSM 19958 / E1-9c), this protein is DNA primase small subunit PriS.